A 381-amino-acid chain; its full sequence is MSPFASESAWLCLAAAAVLGGTLLCGCRSGRQLRSQAVCLAGLWGGACLLSLSLLCTLFLLSVACFLLLYMSSSDQDLLPVDQKAVLVTGADSGFGHGLAKHLDKLGFTVFAGVLDKEGPGAEELRKHCSERLSVLQMDVTKPEQIKDAHSKVTEKIQDKGLWAVVNNAGVFHLPIDGELIPMSIYRKCMAVNFFGTVEVTKAFLPLLRKSKGRLVNVSSMGGTVPLQMTSAYAATKAALTMFSTIIRQELDKWGVKVVTIKPGGFKTNITGSQDIWDKMEKEILDHFSKDIQENYGQDYVHTQKLIIPTLKERSNPDITPVLRDIQHAISARNPSSFYYPGRMAYLWVCLAAYCPTSLLDYVIKKGFYPQPTPRALRTVH.

The chain crosses the membrane as a helical; Signal-anchor for type II membrane protein span at residues 4–24 (FASESAWLCLAAAAVLGGTLL). An NAD(+)-binding site is contributed by 83 to 112 (QKAVLVTGADSGFGHGLAKHLDKLGFTVFA). S220 contributes to the substrate binding site. Y233 serves as the catalytic Proton acceptor.

The protein belongs to the short-chain dehydrogenases/reductases (SDR) family. In terms of assembly, homodimer.

It localises to the endoplasmic reticulum membrane. The enzyme catalyses 17beta-estradiol + NAD(+) = estrone + NADH + H(+). The catalysed reaction is testosterone + NAD(+) = androst-4-ene-3,17-dione + NADH + H(+). It carries out the reaction 17beta-hydroxy-5alpha-androstan-3-one + NAD(+) = 5alpha-androstan-3,17-dione + NADH + H(+). It catalyses the reaction (20S)-hydroxypregn-4-en-3-one + NAD(+) = progesterone + NADH + H(+). In terms of biological role, catalyzes the NAD-dependent oxidation of highly active 17beta-hydroxysteroids, such as estradiol (E2), testosterone (T), and dihydrotestosterone (DHT), to their less active forms and thus regulates the biological potency of these steroids. Oxidizes estradiol to estrone, testosterone to androstenedione, and dihydrotestosterone to 5alpha-androstan-3,17-dione. Also has 20-alpha-HSD activity. In Mus musculus (Mouse), this protein is Estradiol 17-beta-dehydrogenase 2 (Hsd17b2).